We begin with the raw amino-acid sequence, 528 residues long: Phosphoenolpyruvate carboxykinase (ATP) (528 aa).

The substrate site is built by arginine 56, tyrosine 192, and lysine 198. ATP-binding positions include lysine 198, histidine 217, and 233–241; that span reads GLSGTGKTT. Lysine 198 and histidine 217 together coordinate Mn(2+). Aspartate 254 contacts Mn(2+). Residues glutamate 282, arginine 319, and threonine 444 each contribute to the ATP site. Substrate is bound at residue arginine 319.

The protein belongs to the phosphoenolpyruvate carboxykinase (ATP) family. The cofactor is Mn(2+).

It is found in the cytoplasm. It catalyses the reaction oxaloacetate + ATP = phosphoenolpyruvate + ADP + CO2. Its pathway is carbohydrate biosynthesis; gluconeogenesis. Its function is as follows. Involved in the gluconeogenesis. Catalyzes the conversion of oxaloacetate (OAA) to phosphoenolpyruvate (PEP) through direct phosphoryl transfer between the nucleoside triphosphate and OAA. This Bacillus cereus (strain ATCC 10987 / NRS 248) protein is Phosphoenolpyruvate carboxykinase (ATP).